We begin with the raw amino-acid sequence, 446 residues long: Anthranilate N-benzoyltransferase protein 2 (446 aa).

Residues histidine 164 and aspartate 393 each act as proton acceptor in the active site.

It belongs to the plant acyltransferase family. Post-translationally, N-terminus is blocked.

The enzyme catalyses anthranilate + benzoyl-CoA = N-benzoylanthranilate + CoA. It participates in phytoalexin biosynthesis; methoxydianthramide B biosynthesis. Catalyzes the formation of N-benzoylanthranilate, in the course of methoxydianthramide B, a phytoalexin. Phytoalexins are produced in response to infection by parasites, and are essential for the expression of disease resistance. The sequence is that of Anthranilate N-benzoyltransferase protein 2 (HCBT2) from Dianthus caryophyllus (Carnation).